Reading from the N-terminus, the 287-residue chain is Lipoyl synthase (287 aa).

[4Fe-4S] cluster contacts are provided by Cys-34, Cys-39, Cys-45, Cys-60, Cys-64, Cys-67, and Ser-273. Residues 46–262 form the Radical SAM core domain; it reads WNKRHATVMI…KYIAYSKGFL (217 aa).

It belongs to the radical SAM superfamily. Lipoyl synthase family. It depends on [4Fe-4S] cluster as a cofactor.

The protein localises to the cytoplasm. It catalyses the reaction [[Fe-S] cluster scaffold protein carrying a second [4Fe-4S](2+) cluster] + N(6)-octanoyl-L-lysyl-[protein] + 2 oxidized [2Fe-2S]-[ferredoxin] + 2 S-adenosyl-L-methionine + 4 H(+) = [[Fe-S] cluster scaffold protein] + N(6)-[(R)-dihydrolipoyl]-L-lysyl-[protein] + 4 Fe(3+) + 2 hydrogen sulfide + 2 5'-deoxyadenosine + 2 L-methionine + 2 reduced [2Fe-2S]-[ferredoxin]. It functions in the pathway protein modification; protein lipoylation via endogenous pathway; protein N(6)-(lipoyl)lysine from octanoyl-[acyl-carrier-protein]: step 2/2. Catalyzes the radical-mediated insertion of two sulfur atoms into the C-6 and C-8 positions of the octanoyl moiety bound to the lipoyl domains of lipoate-dependent enzymes, thereby converting the octanoylated domains into lipoylated derivatives. The protein is Lipoyl synthase of Wolbachia sp. subsp. Brugia malayi (strain TRS).